We begin with the raw amino-acid sequence, 76 residues long: KANTR integral membrane protein (76 aa).

The signal sequence occupies residues 1-25; that stretch reads MSPFSLLILVICAFSLFFLINLTRG. Topologically, residues 26–34 are extracellular; that stretch reads LSILLVFSK. A helical transmembrane segment spans residues 35–55; it reads NQLLALLLLSIVSLFSISLIS. Over 56–76 the chain is Cytoplasmic; sequence ALIFFDLLPSTFFGFILLFFF.

It is found in the membrane. This chain is KANTR integral membrane protein, found in Homo sapiens (Human).